The primary structure comprises 87 residues: Acyl-CoA-binding protein (87 aa).

Positions 3 to 87 (LKEEFEEHAV…KVKQLLEESA (85 aa)) constitute an ACB domain. Residues 30–34 (YGLYK), lysine 56, and tyrosine 75 each bind an acyl-CoA.

It belongs to the ACBP family.

Functionally, binds medium- and long-chain acyl-CoA esters with very high affinity and may function as an intracellular carrier of acyl-CoA esters. The chain is Acyl-CoA-binding protein (ACABP) from Fritillaria agrestis (Stinkbells).